Consider the following 348-residue polypeptide: Putative methylesterase 14, chloroplastic (348 aa).

2 disordered regions span residues 1 to 29 (MGNK…MNRS) and 60 to 80 (GSMS…SDPF). A chloroplast-targeting transit peptide spans 1 to 76 (MGNKIISMMK…GSTSTRKRTL (76 aa)). The residue at position 77 (S77) is a Phosphoserine. S172 acts as the Acyl-ester intermediate in catalysis. Active-site charge relay system residues include D299 and H327.

It belongs to the AB hydrolase superfamily. Methylesterase family.

It localises to the plastid. Its subcellular location is the chloroplast. Putative methylesterase. The chain is Putative methylesterase 14, chloroplastic from Arabidopsis thaliana (Mouse-ear cress).